The primary structure comprises 508 residues: Mitochondrial distribution and morphology protein 10 (508 aa).

A disordered region spans residues 160-195; sequence PAHPTSTRPTPPQTPPSHTRQPSEPSTPAPSPTPGN.

This sequence belongs to the MDM10 family. In terms of assembly, component of the ER-mitochondria encounter structure (ERMES) or MDM complex, composed of MMM1, MDM10, MDM12 and MDM34. Associates with the mitochondrial outer membrane sorting assembly machinery SAM(core) complex.

The protein resides in the mitochondrion outer membrane. In terms of biological role, component of the ERMES/MDM complex, which serves as a molecular tether to connect the endoplasmic reticulum and mitochondria. Components of this complex are involved in the control of mitochondrial shape and protein biogenesis and may function in phospholipid exchange. MDM10 is involved in the late assembly steps of the general translocase of the mitochondrial outer membrane (TOM complex). Functions in the TOM40-specific route of the assembly of outer membrane beta-barrel proteins, including the association of TOM40 with the receptor TOM22 and small TOM proteins. Can associate with the SAM(core) complex as well as the MDM12-MMM1 complex, both involved in late steps of the major beta-barrel assembly pathway, that is responsible for biogenesis of all outer membrane beta-barrel proteins. May act as a switch that shuttles between both complexes and channels precursor proteins into the TOM40-specific pathway. Plays a role in mitochondrial morphology and in the inheritance of mitochondria. In Cryptococcus neoformans var. neoformans serotype D (strain B-3501A) (Filobasidiella neoformans), this protein is Mitochondrial distribution and morphology protein 10.